The following is a 333-amino-acid chain: Trans-enoyl reductase apdC (333 aa).

Residue 45-48 (FDAK) participates in NADP(+) binding. Residue 131–138 (VGLATVGM) participates in substrate binding. NADP(+) is bound by residues 167–170 (SPHN), Tyr185, and 232–233 (LD). 252-256 (SVTMY) is a binding site for substrate. An NADP(+)-binding site is contributed by 321-322 (VS).

Belongs to the zinc-containing alcohol dehydrogenase family. Monomer.

The protein operates within secondary metabolite biosynthesis. Its function is as follows. Trans-enoyl reductase; part of the gene cluster that mediates the biosynthesis of aspyridones. The polyketide-amino acid backbone preaspyridone A is first assembled by the PKS-NRPS hybrid apdA. The assembly of preaspyridone A is initiated by loading of malonyl-CoA onto apdA, followed by decarboxylation to yield the acetyl starter unit. The growing polyketide chain then elongates into a tetraketide. The adpA PKS module catalyzes three Claisen condensations, as well as beta-keto processing and methylation. Alpha-methylation step during polyketide synthesis is a prerequisite and a key checkpoint for chain transfer between PKS and NRPS modules. The downstream NRPS module contains the condensation (C), adenylation (A), and thiolation (T) domains and catalyzes the incorporation of tyrosine via the formation of the L-tyrosinyl-thioester and the amide linkage between L-tyrosinyl-thioester and the tetraketide. The bimodular assembly line is terminated with a reductase (R) domain that facilitates formation and release of the tetramic acid product. Because apdA lacks a designated enoylreductase (ER) domain, the required activity is provided the enoyl reductase apdC. ApdC appears to operate with different stereoselectivity in different PKS cycle. Combined with apdC, apdA is proposed to synthesize preaspyridone A via about 20 enzymatic steps. A number of oxidative steps performed successively by the cytochrome P450 monooxygenases apdE and apdB are required for the conversion of preaspyridone A to aspyridone A. The cytochrome P450 monooxygenase apdE is responsible for the oxidative dephenylation of preaspyridone A. Finally, the predicted FAD-dependent monooxygenase apdD and the acyl-CoA dehydrogenase apdG may be involved in the transformation of aspyridone A into aspyridone B. This chain is Trans-enoyl reductase apdC, found in Emericella nidulans (strain FGSC A4 / ATCC 38163 / CBS 112.46 / NRRL 194 / M139) (Aspergillus nidulans).